The following is a 430-amino-acid chain: Cysteate synthase (430 aa).

At lysine 106 the chain carries N6-(pyridoxal phosphate)lysine. Pyridoxal 5'-phosphate is bound by residues asparagine 132 and threonine 381.

It belongs to the threonine synthase family. Cysteate synthase subfamily. In terms of assembly, homotrimer. Pyridoxal 5'-phosphate serves as cofactor.

It carries out the reaction O-phospho-L-serine + sulfite + H(+) = L-cysteate + phosphate. It participates in cofactor biosynthesis; coenzyme M biosynthesis. Its function is as follows. Specifically catalyzes the beta-elimination of phosphate from L-phosphoserine and the beta-addition of sulfite to the dehydroalanine intermediate to produce L-cysteate. The polypeptide is Cysteate synthase (Methanoculleus marisnigri (strain ATCC 35101 / DSM 1498 / JR1)).